A 903-amino-acid polypeptide reads, in one-letter code: Cell division cycle protein 48 homolog MJ1156 (903 aa).

Residues 220–227 (GPPGTGKT) and 493–500 (GPPGTGKT) contribute to the ATP site.

It belongs to the AAA ATPase family. CDC48 subfamily.

The polypeptide is Cell division cycle protein 48 homolog MJ1156 (Methanocaldococcus jannaschii (strain ATCC 43067 / DSM 2661 / JAL-1 / JCM 10045 / NBRC 100440) (Methanococcus jannaschii)).